The chain runs to 427 residues: 3-phosphoshikimate 1-carboxyvinyltransferase (427 aa).

Residues Lys-20, Ser-21, and Arg-25 each contribute to the 3-phosphoshikimate site. A phosphoenolpyruvate-binding site is contributed by Lys-20. Gly-92 and Arg-120 together coordinate phosphoenolpyruvate. Residues Ser-165, Gln-167, Asp-313, and Lys-340 each coordinate 3-phosphoshikimate. Gln-167 is a phosphoenolpyruvate binding site. The active-site Proton acceptor is Asp-313. 2 residues coordinate phosphoenolpyruvate: Arg-344 and Arg-388.

This sequence belongs to the EPSP synthase family. In terms of assembly, monomer.

Its subcellular location is the cytoplasm. The catalysed reaction is 3-phosphoshikimate + phosphoenolpyruvate = 5-O-(1-carboxyvinyl)-3-phosphoshikimate + phosphate. It participates in metabolic intermediate biosynthesis; chorismate biosynthesis; chorismate from D-erythrose 4-phosphate and phosphoenolpyruvate: step 6/7. Functionally, catalyzes the transfer of the enolpyruvyl moiety of phosphoenolpyruvate (PEP) to the 5-hydroxyl of shikimate-3-phosphate (S3P) to produce enolpyruvyl shikimate-3-phosphate and inorganic phosphate. This chain is 3-phosphoshikimate 1-carboxyvinyltransferase, found in Geobacillus kaustophilus (strain HTA426).